A 236-amino-acid polypeptide reads, in one-letter code: Phosphoribosylaminoimidazole-succinocarboxamide synthase (236 aa).

It belongs to the SAICAR synthetase family.

The enzyme catalyses 5-amino-1-(5-phospho-D-ribosyl)imidazole-4-carboxylate + L-aspartate + ATP = (2S)-2-[5-amino-1-(5-phospho-beta-D-ribosyl)imidazole-4-carboxamido]succinate + ADP + phosphate + 2 H(+). Its pathway is purine metabolism; IMP biosynthesis via de novo pathway; 5-amino-1-(5-phospho-D-ribosyl)imidazole-4-carboxamide from 5-amino-1-(5-phospho-D-ribosyl)imidazole-4-carboxylate: step 1/2. The chain is Phosphoribosylaminoimidazole-succinocarboxamide synthase (purC) from Rickettsia prowazekii (strain Madrid E).